Consider the following 126-residue polypeptide: Large ribosomal subunit protein bL17 (126 aa).

This sequence belongs to the bacterial ribosomal protein bL17 family. As to quaternary structure, part of the 50S ribosomal subunit. Contacts protein L32.

This Vibrio parahaemolyticus serotype O3:K6 (strain RIMD 2210633) protein is Large ribosomal subunit protein bL17.